The sequence spans 348 residues: Dihydroorotase (348 aa).

Zn(2+) is bound by residues H17 and H19. Residues H19–R21 and N45 contribute to the substrate site. Positions 103, 140, and 178 each coordinate Zn(2+). At K103 the chain carries N6-carboxylysine. H140 serves as a coordination point for substrate. L223 serves as a coordination point for substrate. D251 serves as a coordination point for Zn(2+). D251 is a catalytic residue. H255 and A267 together coordinate substrate.

It belongs to the metallo-dependent hydrolases superfamily. DHOase family. Class II DHOase subfamily. In terms of assembly, homodimer. The cofactor is Zn(2+).

It carries out the reaction (S)-dihydroorotate + H2O = N-carbamoyl-L-aspartate + H(+). The protein operates within pyrimidine metabolism; UMP biosynthesis via de novo pathway; (S)-dihydroorotate from bicarbonate: step 3/3. Catalyzes the reversible cyclization of carbamoyl aspartate to dihydroorotate. In Escherichia coli (strain UTI89 / UPEC), this protein is Dihydroorotase.